The sequence spans 258 residues: Hydroxyethylthiazole kinase (258 aa).

Met37 contacts substrate. Arg112 and Thr158 together coordinate ATP. Substrate is bound at residue Ala185.

This sequence belongs to the Thz kinase family. The cofactor is Mg(2+).

It catalyses the reaction 5-(2-hydroxyethyl)-4-methylthiazole + ATP = 4-methyl-5-(2-phosphooxyethyl)-thiazole + ADP + H(+). It functions in the pathway cofactor biosynthesis; thiamine diphosphate biosynthesis; 4-methyl-5-(2-phosphoethyl)-thiazole from 5-(2-hydroxyethyl)-4-methylthiazole: step 1/1. Its function is as follows. Catalyzes the phosphorylation of the hydroxyl group of 4-methyl-5-beta-hydroxyethylthiazole (THZ). The sequence is that of Hydroxyethylthiazole kinase from Rhizobium etli (strain ATCC 51251 / DSM 11541 / JCM 21823 / NBRC 15573 / CFN 42).